The chain runs to 537 residues: Zinc finger protein 835 (537 aa).

Positions 12-109 are disordered; it reads AELEGNWKHE…RERGGGPKKP (98 aa). Polar residues predominate over residues 63-77; sequence TISSPAATQASVPDD. Over residues 89-104 the composition is skewed to basic and acidic residues; it reads SPKERHPDSRQRERGG. C2H2-type zinc fingers lie at residues 110 to 132, 138 to 160, 166 to 188, 194 to 216, 222 to 244, 250 to 272, 278 to 300, 306 to 328, 334 to 356, 362 to 384, 390 to 412, 418 to 440, 446 to 468, and 474 to 496; these read WKCG…QRIH, FACP…QRTH, YACH…WRTH, HRCA…RRVH, YACA…QRIH, YECS…QRIH, YRCG…RRVH, YTCQ…RRIH, YACG…QRTH, YPCH…RLVH, YRCL…QKIH, YKCG…QRTH, YTCP…HIVH, and YECS…QRTH. Positions 497–537 are disordered; it reads ADSSGRLCPAPTPDSTPGLSQGGETCQQGCPGRNPRGPAED. A compositionally biased stretch (polar residues) spans 509 to 524; that stretch reads PDSTPGLSQGGETCQQ.

This sequence belongs to the krueppel C2H2-type zinc-finger protein family.

The protein resides in the nucleus. Functionally, may be involved in transcriptional regulation. The polypeptide is Zinc finger protein 835 (ZNF835) (Homo sapiens (Human)).